Reading from the N-terminus, the 384-residue chain is Carbamoyl phosphate synthase small chain (384 aa).

Positions 1–195 are CPSase; sequence MLPVLPPALL…LGRGHGTLAD (195 aa). The L-glutamine site is built by S50, G247, and G249. Residues 199–384 enclose the Glutamine amidotransferase type-1 domain; it reads HVVAYDFGVK…RFVALMQERA (186 aa). The active-site Nucleophile is the C275. Residues L276, Q279, N317, G319, and F320 each coordinate L-glutamine. Residues H359 and E361 contribute to the active site.

Belongs to the CarA family. As to quaternary structure, composed of two chains; the small (or glutamine) chain promotes the hydrolysis of glutamine to ammonia, which is used by the large (or ammonia) chain to synthesize carbamoyl phosphate. Tetramer of heterodimers (alpha,beta)4.

The enzyme catalyses hydrogencarbonate + L-glutamine + 2 ATP + H2O = carbamoyl phosphate + L-glutamate + 2 ADP + phosphate + 2 H(+). It carries out the reaction L-glutamine + H2O = L-glutamate + NH4(+). It participates in amino-acid biosynthesis; L-arginine biosynthesis; carbamoyl phosphate from bicarbonate: step 1/1. Its pathway is pyrimidine metabolism; UMP biosynthesis via de novo pathway; (S)-dihydroorotate from bicarbonate: step 1/3. Functionally, small subunit of the glutamine-dependent carbamoyl phosphate synthetase (CPSase). CPSase catalyzes the formation of carbamoyl phosphate from the ammonia moiety of glutamine, carbonate, and phosphate donated by ATP, constituting the first step of 2 biosynthetic pathways, one leading to arginine and/or urea and the other to pyrimidine nucleotides. The small subunit (glutamine amidotransferase) binds and cleaves glutamine to supply the large subunit with the substrate ammonia. This chain is Carbamoyl phosphate synthase small chain, found in Rubrivivax gelatinosus (strain NBRC 100245 / IL144).